The primary structure comprises 136 residues: Transcription antitermination protein NusB (136 aa).

The protein belongs to the NusB family.

Functionally, involved in transcription antitermination. Required for transcription of ribosomal RNA (rRNA) genes. Binds specifically to the boxA antiterminator sequence of the ribosomal RNA (rrn) operons. The polypeptide is Transcription antitermination protein NusB (Salinispora tropica (strain ATCC BAA-916 / DSM 44818 / JCM 13857 / NBRC 105044 / CNB-440)).